A 447-amino-acid polypeptide reads, in one-letter code: Serine/threonine-protein phosphatase 2A 55 kDa regulatory subunit B delta isoform (447 aa).

7 WD repeats span residues Ala26–Pro65, Glu91–Glu132, Ala175–Asn213, Glu224–Arg264, Glu283–Glu321, Glu338–Leu379, and Asp414–Asn447.

It belongs to the phosphatase 2A regulatory subunit B family. In terms of assembly, PP2A consists of a common heterodimeric core enzyme, composed of a 36 kDa catalytic subunit (subunit C) and a 65 kDa constant regulatory subunit (PR65 or subunit A), that associates with a variety of regulatory subunits.

Its subcellular location is the cytoplasm. Functionally, substrate-recognition subunit of protein phosphatase 2A (PP2A) that plays a key role in cell cycle by controlling mitosis entry and exit. The activity of PP2A complexes containing PPP2R2D (PR55-delta) fluctuate during the cell cycle: the activity is high in interphase and low in mitosis. The polypeptide is Serine/threonine-protein phosphatase 2A 55 kDa regulatory subunit B delta isoform (ppp2r2d) (Danio rerio (Zebrafish)).